The sequence spans 61 residues: Disintegrin atroxatin (61 aa).

Residues 1–61 form the Disintegrin domain; sequence NPCCDAATCK…ADCPRKGIYG (61 aa). 5 disulfides stabilise this stretch: C3–C26, C9–C23, C17–C23, C22–C47, and C35–C54. The short motif at 39-41 is the Cell attachment site element; sequence RGD.

The protein belongs to the venom metalloproteinase (M12B) family. P-II subfamily. P-IIa sub-subfamily. In terms of assembly, monomer (disintegrin). Expressed by the venom gland.

The protein localises to the secreted. In terms of biological role, inhibits fibrinogen interaction with platelets. Acts by binding to alpha-IIb/beta-3 (ITGA2B/ITGB3) on the platelet surface and inhibits aggregation induced by ADP, thrombin, platelet-activating factor and collagen. The polypeptide is Disintegrin atroxatin (Crotalus atrox (Western diamondback rattlesnake)).